The primary structure comprises 289 residues: Protease HtpX homolog (289 aa).

Helical transmembrane passes span 9-29 (TGVL…LIGG) and 31-51 (GGMI…YWFS). H133 contributes to the Zn(2+) binding site. E134 is a catalytic residue. H137 contacts Zn(2+). 2 helical membrane-spanning segments follow: residues 143–163 (TLIQ…VDFA) and 182–202 (IGLI…QLAI). E207 contributes to the Zn(2+) binding site.

Belongs to the peptidase M48B family. Zn(2+) serves as cofactor.

The protein resides in the cell membrane. This chain is Protease HtpX homolog, found in Pyrococcus abyssi (strain GE5 / Orsay).